The primary structure comprises 105 residues: Prokineticin-1 (105 aa).

An N-terminal signal peptide occupies residues 1–19 (MRGAVHIFIMLLLATASDC). 5 disulfide bridges follow: Cys26–Cys38, Cys32–Cys50, Cys37–Cys78, Cys60–Cys86, and Cys80–Cys96.

This sequence belongs to the AVIT (prokineticin) family. In terms of tissue distribution, highly expressed in liver and ovary and weakly expressed in testis and placenta. Expressed in mucosa and mesenchyme of embryonic gut during enteric nervous system development (at protein level). Predominantly expressed in kidney and liver. Also expressed in lung, ovary, placenta and testis. In fetal liver, is restricted to and highly expressed in hepatocytes. In adult kidney, expression is restricted to the endothelial tubule cells. In placenta, expressed throughout gestation.

The protein resides in the secreted. Its function is as follows. Potently contracts gastrointestinal (GI) smooth muscle. Induces proliferation, migration and fenestration (the formation of membrane discontinuities) in capillary endothelial cells. Induces proliferation and differentiation, but not migration, of enteric neural crest cells. Directly influences neuroblastoma progression by promoting the proliferation and migration of neuroblastoma cells. Positively regulates PTGS2 expression and prostaglandin synthesis. May play a role in placentation. May play a role in normal and pathological testis angiogenesis. This Mus musculus (Mouse) protein is Prokineticin-1.